Consider the following 165-residue polypeptide: LIM domain transcription factor LMO4.2 (165 aa).

2 consecutive LIM zinc-binding domains span residues 21-83 (KRCA…LFGN) and 85-147 (GACS…ALIN).

Functionally, acts as a positive cofactor of GATA transcription factors to establish the identity of the ventral mesoderm during gastrulation. Down-regulation in the dorsal mesoderm is necessary for the proper formation of this territory since, when present, lmo4 may bind ldb1 and restrict the availability of this cofactor for Spemman organizer transcription factors. At neurula stages, suppresses primary neuron differentiation and modulates gene expression at the Isthmic Organizer of the midbrain-hindbrain boundary. The sequence is that of LIM domain transcription factor LMO4.2 (lmo4.2) from Xenopus tropicalis (Western clawed frog).